Reading from the N-terminus, the 348-residue chain is Rhodopsin (348 aa).

At 1–33 the chain is on the extracellular side; the sequence is TEGPYFYVPMVNTTGIVRSPYEYPQYYLVNPAA. Asparagine 12 is a glycosylation site (N-linked (GlcNAc...) asparagine). The helical transmembrane segment at 34 to 58 threads the bilayer; it reads YAVLGAYMFFLIILGFPINFLTLYV. Over 59 to 70 the chain is Cytoplasmic; it reads TLEHKKLRTPLN. A helical transmembrane segment spans residues 71 to 93; sequence YILLNLAVADLFMVIGGFTTTMY. The Extracellular portion of the chain corresponds to 94-107; it reads SSMHGYFVLGRLGC. A disulfide bond links cysteine 107 and cysteine 184. A helical membrane pass occupies residues 108 to 130; sequence NLEGFSATLGGMISLWSLAVLAI. The short motif at 131–133 is the 'Ionic lock' involved in activated form stabilization element; it reads ERW. Topologically, residues 131–149 are cytoplasmic; that stretch reads ERWVVVCKPISNFRFGENH. A helical membrane pass occupies residues 150–170; the sequence is AIMGVSLTWTMALACTVPPLV. Topologically, residues 171–199 are extracellular; that stretch reads GWSRYIPEGMQCSCGIDYYTRAEGFNNES. N-linked (GlcNAc...) asparagine glycosylation occurs at asparagine 197. The helical transmembrane segment at 200-221 threads the bilayer; that stretch reads FVLYMFFCHFMVPLIIIFFCYG. Residues 222 to 249 lie on the Cytoplasmic side of the membrane; that stretch reads RLLCAVKEAAAAQQESETTQRAEREVTR. A helical transmembrane segment spans residues 250 to 271; sequence MVILMVIGYLVCWLPYASVAWF. Topologically, residues 272-283 are extracellular; sequence IFTHQGSEFGPL. The helical transmembrane segment at 284-305 threads the bilayer; sequence FMTIPAFFAKSSSIYNPVIYIC. Lysine 293 is subject to N6-(retinylidene)lysine. Over 306–348 the chain is Cytoplasmic; that stretch reads MNKQFRNCMITTLFCGKNPFEGEEEGASSTKTEASSASSVSPA. Cysteine 320 carries S-palmitoyl cysteine lipidation. Positions 327–348 are disordered; it reads GEEEGASSTKTEASSASSVSPA. The segment covering 332–348 has biased composition (low complexity); it reads ASSTKTEASSASSVSPA.

This sequence belongs to the G-protein coupled receptor 1 family. Opsin subfamily. In terms of processing, phosphorylated on some or all of the serine and threonine residues present in the C-terminal region. Post-translationally, contains one covalently linked retinal chromophore.

It is found in the membrane. The protein resides in the cell projection. It localises to the cilium. The protein localises to the photoreceptor outer segment. Photoreceptor required for image-forming vision at low light intensity. While most salt water fish species use retinal as chromophore, most freshwater fish use 3-dehydroretinal, or a mixture of retinal and 3-dehydroretinal. Light-induced isomerization of 11-cis to all-trans retinal triggers a conformational change that activates signaling via G-proteins. Subsequent receptor phosphorylation mediates displacement of the bound G-protein alpha subunit by arrestin and terminates signaling. The polypeptide is Rhodopsin (rho) (Neoniphon argenteus (Clearfin squirrelfish)).